The sequence spans 983 residues: MIATLFIIFAFIRAFPWSRKRGRPALALTLMPEGGEDHRGDLNQKGENNNRPRPSISLANNGEAMAPRTRRKSSKFHEVTFSGSVGGGDSDGGGEAINGGNLDVSPSKRHSLSTTTSNSSSAPYRYLSGSSRSRGSRGDCHEYYQLQQHSSSLSNGNRGNRGLSQRSDTMATEAEGEEFDVDPMDEDDEDQTYDRETEEFYSNIQDAAGTGSSSRSKRSSLFSRSDSSATTTSSSGGGTFTGGKRRSAASILSSSMCSDLMTSDRRSSTATEYSVKSVTTGNTSQRRSSGRIRRYVSRMTIAGARRRTTGSFDVENGQGARSPLEGGSPSAGLVLQNLPQRRESFLYRSDSDFEMSPKSMSRNSSIASESHGEDLIVTPFAQILASLRSVRNNLLSLTNVPASNKSRRPNQSSSASRSGNPPGAPLSQGEEAYTRLATDTIEELDWCLDQLETIQTHRSVSDMASLKFKRMLNKELSHFSESSRSGNQISEYICSTFLDKQQEFDLPSLRVEDNPELVAANAAAGQQSAGQYARSRSPRGPPMSQISGVKRPLSHTNSFTGERLPTFGVETPRENELGTLLGELDTWGIQIFSIGEFSVNRPLTCVAYTIFQSRELLTSLMIPPKTFLNFMSTLEDHYVKDNPFHNSLHAADVTQSTNVLLNTPALEGVFTPLEVGGALFAACIHDVDHPGLTNQFLVNSSSELALMYNDESVLENHHLAVAFKLLQNQGCDIFCNMQKKQRQTLRKMVIDIVLSTDMSKHMSLLADLKTMVETKKVAGSGVLLLDNYTDRIQVLENLVHCADLSNPTKPLPLYKRWVALLMEEFFLQGDKERESGMDISPMCDRHNATIEKSQVGFIDYIVHPLWETWADLVHPDAQDILDTLEENRDYYQSMIPPSPPPSGVDENPQEDRIRFQVTLEESDQENLAELEEGDESGGESTTTGTTGTTAASALSGAGGGGGGGGGMAPRTGGCQNQPQHGGM.

Disordered stretches follow at residues 31–333 (MPEG…SAGL), 349–370 (SDSDFEMSPKSMSRNSSIASES), 400–429 (VPASNKSRRPNQSSSASRSGNPPGAPLSQG), and 528–566 (SAGQYARSRSPRGPPMSQISGVKRPLSHTNSFTGERLPT). Over residues 35–50 (GEDHRGDLNQKGENNN) the composition is skewed to basic and acidic residues. Residues 51 to 60 (RPRPSISLAN) show a composition bias toward polar residues. The segment covering 84–97 (SVGGGDSDGGGEAI) has biased composition (gly residues). Low complexity-rich tracts occupy residues 112–121 (LSTTTSNSSS) and 145–167 (QLQQHSSSLSNGNRGNRGLSQRS). The segment covering 174 to 199 (AEGEEFDVDPMDEDDEDQTYDRETEE) has biased composition (acidic residues). Composition is skewed to low complexity over residues 219-234 (SSLFSRSDSSATTTSS) and 248-261 (AASILSSSMCSDLM). Composition is skewed to polar residues over residues 268-287 (STATEYSVKSVTTGNTSQRR), 358-368 (KSMSRNSSIAS), and 401-419 (PASNKSRRPNQSSSASRSG). In terms of domain architecture, PDEase spans 569–898 (VETPRENELG…DYYQSMIPPS (330 aa)). The active-site Proton donor is the H645. 3',5'-cyclic AMP is bound at residue 645 to 649 (HNSLH). A divalent metal cation is bound by residues H649, H685, D686, and D803. 3',5'-cyclic AMP-binding residues include D686, D803, and Q854. Residues 920-937 (EESDQENLAELEEGDESG) show a composition bias toward acidic residues. The tract at residues 920–983 (EESDQENLAE…CQNQPQHGGM (64 aa)) is disordered. Over residues 938 to 955 (GESTTTGTTGTTAASALS) the composition is skewed to low complexity. Gly residues predominate over residues 956 to 967 (GAGGGGGGGGGM). Residues 973-983 (GCQNQPQHGGM) show a composition bias toward polar residues.

The protein belongs to the cyclic nucleotide phosphodiesterase family. PDE4 subfamily. Monomer. A divalent metal cation serves as cofactor.

The catalysed reaction is 3',5'-cyclic AMP + H2O = AMP + H(+). It participates in purine metabolism; 3',5'-cyclic AMP degradation; AMP from 3',5'-cyclic AMP: step 1/1. Functionally, hydrolyzes the second messenger cAMP, which is a key regulator of many important physiological processes. Vital for female fertility. Required for learning/memory. This Drosophila melanogaster (Fruit fly) protein is 3',5'-cyclic-AMP phosphodiesterase, isoforms N/G.